A 209-amino-acid polypeptide reads, in one-letter code: Thymidine kinase (209 aa).

ATP is bound by residues 9-16 (AAMNAGKS) and 88-91 (DEAQ). E89 functions as the Proton acceptor in the catalytic mechanism. C146, C148, C183, and H186 together coordinate Zn(2+).

Belongs to the thymidine kinase family. As to quaternary structure, homotetramer.

The protein localises to the cytoplasm. It carries out the reaction thymidine + ATP = dTMP + ADP + H(+). The protein is Thymidine kinase of Legionella pneumophila (strain Paris).